The following is a 144-amino-acid chain: MRLNTLSPAEGAKHSAKRLGRGIGSGLGKTGGRGHKGQKSRTGGGVRRGFEGGQMPLYRRLPKFGFTSMKAAVTAEVRLNDLAKVEGGVVTLESLKAANVITKDIQFVKIILAGEVKGAVVVRGLRVTKGAKAAIEAAGGSVEE.

A disordered region spans residues 1-53; that stretch reads MRLNTLSPAEGAKHSAKRLGRGIGSGLGKTGGRGHKGQKSRTGGGVRRGFEGG. The segment covering 21-31 has biased composition (gly residues); sequence RGIGSGLGKTG.

This sequence belongs to the universal ribosomal protein uL15 family. Part of the 50S ribosomal subunit.

Functionally, binds to the 23S rRNA. This is Large ribosomal subunit protein uL15 from Pasteurella multocida (strain Pm70).